A 317-amino-acid chain; its full sequence is Porphobilinogen deaminase (317 aa).

The residue at position 245 (Cys-245) is an S-(dipyrrolylmethanemethyl)cysteine.

Belongs to the HMBS family. In terms of assembly, monomer. Dipyrromethane is required as a cofactor.

It catalyses the reaction 4 porphobilinogen + H2O = hydroxymethylbilane + 4 NH4(+). The protein operates within porphyrin-containing compound metabolism; protoporphyrin-IX biosynthesis; coproporphyrinogen-III from 5-aminolevulinate: step 2/4. It functions in the pathway porphyrin-containing compound metabolism; chlorophyll biosynthesis. Its function is as follows. Tetrapolymerization of the monopyrrole PBG into the hydroxymethylbilane pre-uroporphyrinogen in several discrete steps. The chain is Porphobilinogen deaminase from Synechococcus sp. (strain RCC307).